Consider the following 81-residue polypeptide: High-potential iron-sulfur protein (81 aa).

The [4Fe-4S] cluster site is built by cysteine 43, cysteine 46, cysteine 59, and cysteine 73.

This sequence belongs to the high-potential iron-sulfur protein (HiPIP) family. In terms of assembly, homodimer.

Functionally, specific class of high-redox-potential 4Fe-4S ferredoxins. Functions in anaerobic electron transport in most purple and in some other photosynthetic bacteria and in at least one genus (Paracoccus) of halophilic, denitrifying bacteria. In Thiococcus pfennigii (Thiocapsa pfennigii), this protein is High-potential iron-sulfur protein (hip).